The following is a 162-amino-acid chain: Ribosome maturation factor RimP (162 aa).

This sequence belongs to the RimP family.

The protein resides in the cytoplasm. Required for maturation of 30S ribosomal subunits. The chain is Ribosome maturation factor RimP from Cupriavidus taiwanensis (strain DSM 17343 / BCRC 17206 / CCUG 44338 / CIP 107171 / LMG 19424 / R1) (Ralstonia taiwanensis (strain LMG 19424)).